The following is a 153-amino-acid chain: MNKFVKSLLVAGSVAALAACSSSNNDAAGNGAAQTFGGYSVADLQQRYNTVYFGFDKYDITGEYVQILDAHAAYLNATPAAKVLVEGNTDERGTPEYNIALGQRRADAVKGYLAGKGVDAGKLGTVSYGEEKPAVLGHDEAAYSKNRRAVLAY.

Residues 1-19 (MNKFVKSLLVAGSVAALAA) form the signal peptide. A lipid anchor (N-palmitoyl cysteine) is attached at cysteine 20. Residue cysteine 20 is the site of S-diacylglycerol cysteine attachment. Residues 40-153 (SVADLQQRYN…SKNRRAVLAY (114 aa)) form the OmpA-like domain. Peptidoglycan binding stretches follow at residues 55–56 (FD) and 97–101 (YNIAL).

This sequence belongs to the Pal lipoprotein family. In terms of assembly, the Tol-Pal system is composed of five core proteins: the inner membrane proteins TolA, TolQ and TolR, the periplasmic protein TolB and the outer membrane protein Pal. They form a network linking the inner and outer membranes and the peptidoglycan layer.

It localises to the cell outer membrane. In terms of biological role, part of the Tol-Pal system, which plays a role in outer membrane invagination during cell division and is important for maintaining outer membrane integrity. This is Peptidoglycan-associated lipoprotein from Haemophilus influenzae (strain ATCC 51907 / DSM 11121 / KW20 / Rd).